Here is a 520-residue protein sequence, read N- to C-terminus: Peptide chain release factor 3 (520 aa).

Positions 8–277 constitute a tr-type G domain; the sequence is ESRKTFAIIS…HAPMPNARQT (270 aa). Residues 17 to 24, 85 to 89, and 139 to 142 contribute to the GTP site; these read SHPDAGKT, DTPGH, and NKLD.

The protein belongs to the TRAFAC class translation factor GTPase superfamily. Classic translation factor GTPase family. PrfC subfamily.

It localises to the cytoplasm. Functionally, increases the formation of ribosomal termination complexes and stimulates activities of RF-1 and RF-2. It binds guanine nucleotides and has strong preference for UGA stop codons. It may interact directly with the ribosome. The stimulation of RF-1 and RF-2 is significantly reduced by GTP and GDP, but not by GMP. This chain is Peptide chain release factor 3, found in Staphylococcus epidermidis (strain ATCC 35984 / DSM 28319 / BCRC 17069 / CCUG 31568 / BM 3577 / RP62A).